A 286-amino-acid chain; its full sequence is Homoserine kinase (286 aa).

Position 78-88 (78-88) interacts with ATP; that stretch reads PLARGLGSSSS.

The protein belongs to the GHMP kinase family. Homoserine kinase subfamily.

It localises to the cytoplasm. The catalysed reaction is L-homoserine + ATP = O-phospho-L-homoserine + ADP + H(+). The protein operates within amino-acid biosynthesis; L-threonine biosynthesis; L-threonine from L-aspartate: step 4/5. In terms of biological role, catalyzes the ATP-dependent phosphorylation of L-homoserine to L-homoserine phosphate. This chain is Homoserine kinase, found in Streptococcus thermophilus (strain CNRZ 1066).